An 895-amino-acid polypeptide reads, in one-letter code: Putative endoplasmic reticulum metallopeptidase 1-B (895 aa).

The interval 1–27 is disordered; it reads MSTGIRRRHADEKKNILEKESLQNDET. Topologically, residues 1–39 are cytoplasmic; it reads MSTGIRRRHADEKKNILEKESLQNDETQREMEKDISLLR. The segment covering 9-27 has biased composition (basic and acidic residues); sequence HADEKKNILEKESLQNDET. Residues 40–60 form a helical membrane-spanning segment; it reads PAHWNFIGLFFLVLIIGTTFL. The Lumenal portion of the chain corresponds to 61–374; it reads HKCLPEPKDP…KPAEYADRKT (314 aa). Residue N156 is glycosylated (N-linked (GlcNAc...) asparagine). 2 residues coordinate Zn(2+): H180 and D192. E226 serves as the catalytic Proton acceptor. Residues E227, E253, and H329 each coordinate Zn(2+). Residues 375 to 395 traverse the membrane as a helical segment; the sequence is VFFDFLGLFVIIYPLSIAHLV. Residues 396–424 lie on the Cytoplasmic side of the membrane; the sequence is NMLTICTVIALMSHRFYSKTFITFLALRD. A helical membrane pass occupies residues 425–445; that stretch reads YVLTILTIALVLKAMTFMSLF. Topologically, residues 446-457 are lumenal; the sequence is TYGALRWYTRHW. A helical transmembrane segment spans residues 458–478; it reads LALVAYGLPSVWAGISVQGLL. Over 479–489 the chain is Cytoplasmic; the sequence is TARLAPKAREE. Residues 490–512 traverse the membrane as a helical segment; it reads YGSTLELIHLTLISGILLAFTYY. At 513–515 the chain is on the lumenal side; the sequence is DIA. A helical membrane pass occupies residues 516–538; it reads SGFLFALLLVPAIKSIITYFGAW. The Cytoplasmic portion of the chain corresponds to 539-553; it reads PTCPTFNTILTLILS. Residues 554–574 traverse the membrane as a helical segment; the sequence is FPGCAMAIYTTEMLLSIFIPI. Topologically, residues 575 to 584 are lumenal; the sequence is MGRSSYNPEP. Residues 585-605 traverse the membrane as a helical segment; sequence AVSFFVAFSAGCIVLSLGGLV. Residues 606–619 lie on the Cytoplasmic side of the membrane; it reads AKSRNSRSSNEAGL. Residues 620–640 form a helical membrane-spanning segment; it reads LELIYNILGVLLVTLTILYVF. Over 641 to 895 the chain is Lumenal; it reads SSFWPSPYRF…WNVDQVYKYF (255 aa). N-linked (GlcNAc...) asparagine glycans are attached at residues N679 and N796.

This sequence belongs to the peptidase M28 family. The cofactor is Zn(2+).

It localises to the endoplasmic reticulum membrane. This chain is Putative endoplasmic reticulum metallopeptidase 1-B, found in Caenorhabditis elegans.